A 150-amino-acid chain; its full sequence is 1,4-dihydroxy-2-naphthoyl-CoA hydrolase (150 aa).

Asp-22 is an active-site residue.

This sequence belongs to the 4-hydroxybenzoyl-CoA thioesterase family. DHNA-CoA hydrolase subfamily.

It carries out the reaction 1,4-dihydroxy-2-naphthoyl-CoA + H2O = 1,4-dihydroxy-2-naphthoate + CoA + H(+). The protein operates within cofactor biosynthesis; phylloquinone biosynthesis. Its pathway is quinol/quinone metabolism; 1,4-dihydroxy-2-naphthoate biosynthesis; 1,4-dihydroxy-2-naphthoate from chorismate: step 7/7. In terms of biological role, catalyzes the hydrolysis of 1,4-dihydroxy-2-naphthoyl-CoA (DHNA-CoA) to 1,4-dihydroxy-2-naphthoate (DHNA), a reaction involved in phylloquinone (vitamin K1) biosynthesis. This chain is 1,4-dihydroxy-2-naphthoyl-CoA hydrolase, found in Prochlorococcus marinus (strain NATL1A).